We begin with the raw amino-acid sequence, 503 residues long: AMP phosphorylase (503 aa).

AMP-binding positions include G168, 194–199, and T203; that span reads SRAITS. D256 acts as the Proton donor in catalysis. S264 and K288 together coordinate AMP.

It belongs to the thymidine/pyrimidine-nucleoside phosphorylase family. Type 2 subfamily.

The catalysed reaction is AMP + phosphate = alpha-D-ribose 1,5-bisphosphate + adenine. It carries out the reaction CMP + phosphate = cytosine + alpha-D-ribose 1,5-bisphosphate. The enzyme catalyses UMP + phosphate = alpha-D-ribose 1,5-bisphosphate + uracil. In terms of biological role, catalyzes the conversion of AMP and phosphate to adenine and ribose 1,5-bisphosphate (R15P). Exhibits phosphorylase activity toward CMP and UMP in addition to AMP. Functions in an archaeal AMP degradation pathway, together with R15P isomerase and RubisCO. The protein is AMP phosphorylase of Methanocaldococcus jannaschii (strain ATCC 43067 / DSM 2661 / JAL-1 / JCM 10045 / NBRC 100440) (Methanococcus jannaschii).